Here is a 358-residue protein sequence, read N- to C-terminus: Peptide chain release factor 1 (358 aa).

Position 233 is an N5-methylglutamine (Gln233).

This sequence belongs to the prokaryotic/mitochondrial release factor family. Post-translationally, methylated by PrmC. Methylation increases the termination efficiency of RF1.

The protein localises to the cytoplasm. Its function is as follows. Peptide chain release factor 1 directs the termination of translation in response to the peptide chain termination codons UAG and UAA. This chain is Peptide chain release factor 1, found in Listeria monocytogenes serotype 4b (strain CLIP80459).